We begin with the raw amino-acid sequence, 367 residues long: tRNA/tmRNA (uracil-C(5))-methyltransferase (367 aa).

Residues Gln191, Tyr218, Asn223, Glu239, and Asp299 each coordinate S-adenosyl-L-methionine. Cys324 functions as the Nucleophile in the catalytic mechanism. Glu358 serves as the catalytic Proton acceptor.

Belongs to the class I-like SAM-binding methyltransferase superfamily. RNA M5U methyltransferase family. TrmA subfamily.

The enzyme catalyses uridine(54) in tRNA + S-adenosyl-L-methionine = 5-methyluridine(54) in tRNA + S-adenosyl-L-homocysteine + H(+). It catalyses the reaction uridine(341) in tmRNA + S-adenosyl-L-methionine = 5-methyluridine(341) in tmRNA + S-adenosyl-L-homocysteine + H(+). Functionally, dual-specificity methyltransferase that catalyzes the formation of 5-methyluridine at position 54 (m5U54) in all tRNAs, and that of position 341 (m5U341) in tmRNA (transfer-mRNA). In Campylobacter concisus (strain 13826), this protein is tRNA/tmRNA (uracil-C(5))-methyltransferase.